The primary structure comprises 141 residues: S-adenosylmethionine decarboxylase proenzyme (141 aa).

Residue S63 is the Schiff-base intermediate with substrate; via pyruvic acid of the active site. S63 is subject to Pyruvic acid (Ser); by autocatalysis. The Proton acceptor; for processing activity role is filled by H68. C83 acts as the Proton donor; for catalytic activity in catalysis.

This sequence belongs to the prokaryotic AdoMetDC family. Type 1 subfamily. As to quaternary structure, heterotetramer of two alpha and two beta chains arranged as a dimer of alpha/beta heterodimers. The cofactor is pyruvate. Is synthesized initially as an inactive proenzyme. Formation of the active enzyme involves a self-maturation process in which the active site pyruvoyl group is generated from an internal serine residue via an autocatalytic post-translational modification. Two non-identical subunits are generated from the proenzyme in this reaction, and the pyruvate is formed at the N-terminus of the alpha chain, which is derived from the carboxyl end of the proenzyme. The post-translation cleavage follows an unusual pathway, termed non-hydrolytic serinolysis, in which the side chain hydroxyl group of the serine supplies its oxygen atom to form the C-terminus of the beta chain, while the remainder of the serine residue undergoes an oxidative deamination to produce ammonia and the pyruvoyl group blocking the N-terminus of the alpha chain.

The enzyme catalyses S-adenosyl-L-methionine + H(+) = S-adenosyl 3-(methylsulfanyl)propylamine + CO2. The protein operates within amine and polyamine biosynthesis; S-adenosylmethioninamine biosynthesis; S-adenosylmethioninamine from S-adenosyl-L-methionine: step 1/1. Functionally, catalyzes the decarboxylation of S-adenosylmethionine to S-adenosylmethioninamine (dcAdoMet), the propylamine donor required for the synthesis of the polyamines spermine and spermidine from the diamine putrescine. This Thermococcus onnurineus (strain NA1) protein is S-adenosylmethionine decarboxylase proenzyme.